A 221-amino-acid chain; its full sequence is Small ribosomal subunit protein eS1 (221 aa).

Belongs to the eukaryotic ribosomal protein eS1 family.

This is Small ribosomal subunit protein eS1 from Pyrobaculum aerophilum (strain ATCC 51768 / DSM 7523 / JCM 9630 / CIP 104966 / NBRC 100827 / IM2).